The primary structure comprises 120 residues: Large ribosomal subunit protein eL34x (120 aa).

The segment at 31-50 is disordered; the sequence is TYQTTNKRASGPKCPVTGKR.

Belongs to the eukaryotic ribosomal protein eL34 family.

The protein is Large ribosomal subunit protein eL34x (RPL34C) of Arabidopsis thaliana (Mouse-ear cress).